A 346-amino-acid polypeptide reads, in one-letter code: Very-long-chain 3-oxoacyl-CoA reductase (346 aa).

The helical transmembrane segment at 23-43 (AAWIVFGLGISKMVFLTLNFS) threads the bilayer. NADP(+) is bound by residues Val69, Asp123, Asn150, Tyr222, Lys226, Val255, and Ser257. The Proton donor role is filled by Tyr222. Lys226 (lowers pKa of active site Tyr) is an active-site residue.

This sequence belongs to the short-chain dehydrogenases/reductases (SDR) family.

The protein localises to the endoplasmic reticulum membrane. The catalysed reaction is a very-long-chain (3R)-3-hydroxyacyl-CoA + NADP(+) = a very-long-chain 3-oxoacyl-CoA + NADPH + H(+). It functions in the pathway lipid metabolism; fatty acid biosynthesis. Component of the microsomal membrane bound fatty acid elongation system, which produces the 26-carbon very long-chain fatty acids (VLCFA) from palmitate. Catalyzes the reduction of the 3-ketoacyl-CoA intermediate that is formed in each cycle of fatty acid elongation. VLCFAs serve as precursors for ceramide and sphingolipids. This is Very-long-chain 3-oxoacyl-CoA reductase from Kluyveromyces lactis (strain ATCC 8585 / CBS 2359 / DSM 70799 / NBRC 1267 / NRRL Y-1140 / WM37) (Yeast).